Reading from the N-terminus, the 456-residue chain is tRNA modification GTPase MnmE (456 aa).

Residues Arg24, Glu81, and Lys120 each contribute to the (6S)-5-formyl-5,6,7,8-tetrahydrofolate site. The TrmE-type G domain occupies Gly216–Gly379. Asn226 is a K(+) binding site. GTP-binding positions include Asn226–Ser231, Thr245–Thr251, Asp270–Gly273, and Asn335–Asp338. Position 230 (Ser230) interacts with Mg(2+). K(+)-binding residues include Thr245, Ile247, and Thr250. Residue Thr251 coordinates Mg(2+). Lys456 contributes to the (6S)-5-formyl-5,6,7,8-tetrahydrofolate binding site.

The protein belongs to the TRAFAC class TrmE-Era-EngA-EngB-Septin-like GTPase superfamily. TrmE GTPase family. In terms of assembly, homodimer. Heterotetramer of two MnmE and two MnmG subunits. K(+) serves as cofactor.

The protein localises to the cytoplasm. In terms of biological role, exhibits a very high intrinsic GTPase hydrolysis rate. Involved in the addition of a carboxymethylaminomethyl (cmnm) group at the wobble position (U34) of certain tRNAs, forming tRNA-cmnm(5)s(2)U34. This is tRNA modification GTPase MnmE from Pseudomonas fluorescens (strain Pf0-1).